Reading from the N-terminus, the 146-residue chain is Leptin (146 aa).

Cysteines 96 and 146 form a disulfide.

The protein belongs to the leptin family.

The protein localises to the secreted. Key player in the regulation of energy balance and body weight control. Once released into the circulation, has central and peripheral effects by binding LEPR, found in many tissues, which results in the activation of several major signaling pathways. In the hypothalamus, acts as an appetite-regulating factor that induces a decrease in food intake and an increase in energy consumption by inducing anorexinogenic factors and suppressing orexigenic neuropeptides, also regulates bone mass and secretion of hypothalamo-pituitary-adrenal hormones. In the periphery, increases basal metabolism, influences reproductive function, regulates pancreatic beta-cell function and insulin secretion, is pro-angiogenic for endothelial cell and affects innate and adaptive immunity. In the arcuate nucleus of the hypothalamus, activates by depolarization POMC neurons inducing FOS and SOCS3 expression to release anorexigenic peptides and inhibits by hyperpolarization NPY neurons inducing SOCS3 with a consequent reduction on release of orexigenic peptides. In addition to its known satiety inducing effect, has a modulatory role in nutrient absorption. In the intestine, reduces glucose absorption by enterocytes by activating PKC and leading to a sequential activation of p38, PI3K and ERK signaling pathways which exerts an inhibitory effect on glucose absorption. Acts as a growth factor on certain tissues, through the activation of different signaling pathways increases expression of genes involved in cell cycle regulation such as CCND1, via JAK2-STAT3 pathway, or VEGFA, via MAPK1/3 and PI3K-AKT1 pathways. May also play an apoptotic role via JAK2-STAT3 pathway and up-regulation of BIRC5 expression. Pro-angiogenic, has mitogenic activity on vascular endothelial cells and plays a role in matrix remodeling by regulating the expression of matrix metalloproteinases (MMPs) and tissue inhibitors of metalloproteinases (TIMPs). In innate immunity, modulates the activity and function of neutrophils by increasing chemotaxis and the secretion of oxygen radicals. Increases phagocytosis by macrophages and enhances secretion of pro-inflammatory mediators. Increases cytotoxic ability of NK cells. Plays a pro-inflammatory role, in synergy with IL1B, by inducing NOS2 which promotes the production of IL6, IL8 and Prostaglandin E2, through a signaling pathway that involves JAK2, PI3K, MAP2K1/MEK1 and MAPK14/p38. In adaptive immunity, promotes the switch of memory T-cells towards T helper-1 cell immune responses. Increases CD4(+)CD25(-) T-cell proliferation and reduces autophagy during TCR (T-cell receptor) stimulation, through MTOR signaling pathway activation and BCL2 up-regulation. This is Leptin (LEP) from Gorilla gorilla gorilla (Western lowland gorilla).